Consider the following 440-residue polypeptide: Methylthioribose-1-phosphate isomerase (440 aa).

Residue Asp-285 is the Proton donor of the active site.

It belongs to the eIF-2B alpha/beta/delta subunits family. MtnA subfamily.

It localises to the cytoplasm. It is found in the nucleus. The catalysed reaction is 5-(methylsulfanyl)-alpha-D-ribose 1-phosphate = 5-(methylsulfanyl)-D-ribulose 1-phosphate. Its pathway is amino-acid biosynthesis; L-methionine biosynthesis via salvage pathway; L-methionine from S-methyl-5-thio-alpha-D-ribose 1-phosphate: step 1/6. Its function is as follows. Catalyzes the interconversion of methylthioribose-1-phosphate (MTR-1-P) into methylthioribulose-1-phosphate (MTRu-1-P). This Botryotinia fuckeliana (strain B05.10) (Noble rot fungus) protein is Methylthioribose-1-phosphate isomerase (mri1).